Here is a 199-residue protein sequence, read N- to C-terminus: Cytosine-containing mismatch-binding protein 1 (199 aa).

A DNA-binding region (HMG box) is located at residues 123–197; it reads PKKPSSAFIL…QYDKFMKEAG (75 aa).

In terms of assembly, monomer.

The protein localises to the nucleus. Binds to cytosines in base mismatches and opposite chemically altered guanines. May be involved in repair of DNA damage. The protein is Cytosine-containing mismatch-binding protein 1 of Schizosaccharomyces pombe (strain 972 / ATCC 24843) (Fission yeast).